Reading from the N-terminus, the 156-residue chain is MKDQIYMELLKKLKDIVEPICEKYSYELVDLEYRREPHGWVLRVYIDKVGGVTVEDCAYISEKISKELDIKDPIPHSYILEVSSPGLDRPLKRKRDFERHIGEKVNITLLEEIEGKKKVEGKIFKVDEKNVTLKVDDSLMVIPIEKIKKALLIVEF.

This sequence belongs to the RimP family.

The protein resides in the cytoplasm. Its function is as follows. Required for maturation of 30S ribosomal subunits. The chain is Ribosome maturation factor RimP from Dictyoglomus turgidum (strain DSM 6724 / Z-1310).